The sequence spans 875 residues: Serrate RNA effector molecule homolog (875 aa).

The interval 1–90 (MGDSDDEYDR…RRDWDEHSSD (90 aa)) is disordered. G2 is modified (N-acetylglycine). A Phosphoserine modification is found at S4. Phosphotyrosine is present on Y8. The segment covering 8–73 (YDRRRRDKFR…ERFSPPRHEL (66 aa)) has biased composition (basic and acidic residues). 3 positions are modified to phosphoserine: S67, S74, and S136. Residue K150 forms a Glycyl lysine isopeptide (Lys-Gly) (interchain with G-Cter in SUMO2) linkage. The disordered stretch occupies residues 272 to 411 (EEEEQAGKTG…KPKDAAGLEC (140 aa)). The segment covering 297-345 (EGERKANDKDEKKEDGKQAENDSSNDDKTKKSEGDGDKEEKKEEAEKEA) has biased composition (basic and acidic residues). The segment covering 369 to 386 (SESESEGGQAEEEKEEAE) has biased composition (acidic residues). Residues 387-411 (EALKEKEKPKEEEKEKPKDAAGLEC) show a composition bias toward basic and acidic residues. Phosphoserine is present on residues S492 and S539. T543 bears the Phosphothreonine mark. The residue at position 569 (S569) is a Phosphoserine. Residues 571-597 (EEEELLGSSGGPPPEEPPKEGNPAEIN) are disordered. T670 is modified (phosphothreonine). Position 678 is a phosphoserine (S678). Omega-N-methylarginine is present on residues R832, R839, and R849. A disordered region spans residues 834–853 (NYDAFRGQGGYPGKPRNRMV).

Belongs to the ARS2 family. Interacts with CASP8AP2 and ERBB4. Interacts with NCBP1/CBP80 and DROSHA. Interacts with LUZP4. Interacts with NCBP2/CBP20 and NCBP3. Interacts with MTREX. Widely expressed, with a preference for proliferating cells. Highly expressed in hematopoietic tissues and reduced or absent expression in parenchymal organs like liver and kidney. In the brain, expressed in the subventricular zone by niche astrocytes, ependymal cells and neural stem cells. In this cerebral context, expressed in slowly dividing cells.

Its subcellular location is the nucleus. The protein resides in the nucleoplasm. It localises to the cytoplasm. Its function is as follows. Acts as a mediator between the cap-binding complex (CBC) and the primary microRNAs (miRNAs) processing machinery during cell proliferation. Contributes to the stability and delivery of capped primary miRNA transcripts to the primary miRNA processing complex containing DGCR8 and DROSHA, thereby playing a role in RNA-mediated gene silencing (RNAi) by miRNAs. Binds capped RNAs (m7GpppG-capped RNA); however interaction is probably mediated via its interaction with NCBP1/CBP80 component of the CBC complex. Involved in cell cycle progression at S phase. Does not directly confer arsenite resistance but rather modulates arsenic sensitivity. Independently of its activity on miRNAs, necessary and sufficient to promote neural stem cell self-renewal. Does so by directly binding SOX2 promoter and positively regulating its transcription. In Mus musculus (Mouse), this protein is Serrate RNA effector molecule homolog (Srrt).